Consider the following 334-residue polypeptide: Protein translocase subunit SecF (334 aa).

6 consecutive transmembrane segments (helical) span residues 18 to 38 (VAAG…AVTG), 144 to 164 (GAAM…AIRF), 168 to 190 (FGLA…IKIF), 195 to 217 (SLTV…IIIF), 258 to 278 (ATLA…WVMA), and 279 to 299 (FGVV…LLWI).

It belongs to the SecD/SecF family. SecF subfamily. Forms a complex with SecD. Part of the essential Sec protein translocation apparatus which comprises SecA, SecYEG and auxiliary proteins SecDF. Other proteins may also be involved.

The protein localises to the cell inner membrane. Functionally, part of the Sec protein translocase complex. Interacts with the SecYEG preprotein conducting channel. SecDF uses the proton motive force (PMF) to complete protein translocation after the ATP-dependent function of SecA. This Gemmatimonas aurantiaca (strain DSM 14586 / JCM 11422 / NBRC 100505 / T-27) protein is Protein translocase subunit SecF.